A 379-amino-acid polypeptide reads, in one-letter code: Protein COS4 (379 aa).

4 helical membrane-spanning segments follow: residues 43 to 63 (IYKS…SVWW), 70 to 90 (IYPL…VLVI), 233 to 253 (ISNI…YVSR), and 255 to 275 (MCLL…VQGF).

The protein belongs to the DUP/COS family.

It is found in the membrane. The sequence is that of Protein COS4 (COS4) from Saccharomyces cerevisiae (strain ATCC 204508 / S288c) (Baker's yeast).